Reading from the N-terminus, the 859-residue chain is Sulfate permease 1 (859 aa).

N-linked (GlcNAc...) asparagine glycosylation is found at asparagine 51 and asparagine 93. A run of 8 helical transmembrane segments spans residues 94–114 (LTAKSAGSYLVSLFPIIKWFP), 116–136 (YNFTWGYADLVAGITVGCVLV), 148–168 (LSPEYGLYSSFIGAFIYSLFA), 173–193 (VCIGPVAVMSLQTAKVIAEVL), 206–226 (PIIATTLCLLCGIVATGLGIL), 234–254 (LISLNAVAGFMTGSAFNIIWG), 292–312 (FGLIPLVILYVWKWWCGTFGI), and 332–352 (FYFYAQAMRNAVVIVVFTAIS). 2 N-linked (GlcNAc...) asparagine glycosylation sites follow: asparagine 358 and asparagine 391. 4 helical membrane-spanning segments follow: residues 395 to 415 (EIPASIIVLVLEHIAISKSFG), 428 to 448 (LIAIGVTNLIGTFFHSYPATG), 468 to 488 (VFTGGCVLLALYCLTDAFFFI), and 525 to 545 (FIVTVFITVFSSIENGIYFAM). Asparagine 630, asparagine 653, and asparagine 718 each carry an N-linked (GlcNAc...) asparagine glycan. An STAS domain is found at 630–808 (NTTVRPPPPG…SIIAGHSSFH (179 aa)).

The protein belongs to the SLC26A/SulP transporter (TC 2.A.53) family.

The protein resides in the membrane. In terms of biological role, high affinity uptake of sulfate into the cell. The sequence is that of Sulfate permease 1 (SUL1) from Saccharomyces cerevisiae (strain ATCC 204508 / S288c) (Baker's yeast).